A 189-amino-acid chain; its full sequence is GTP cyclohydrolase 1 (189 aa).

3 residues coordinate Zn(2+): Cys78, His81, and Cys150.

Belongs to the GTP cyclohydrolase I family. Homomer.

The enzyme catalyses GTP + H2O = 7,8-dihydroneopterin 3'-triphosphate + formate + H(+). Its pathway is cofactor biosynthesis; 7,8-dihydroneopterin triphosphate biosynthesis; 7,8-dihydroneopterin triphosphate from GTP: step 1/1. This Bacillus mycoides (strain KBAB4) (Bacillus weihenstephanensis) protein is GTP cyclohydrolase 1.